Consider the following 410-residue polypeptide: Sporulation killing factor maturation protein SkfB (410 aa).

One can recognise a Radical SAM core domain in the interval 103-314 (SYLPISCTLQ…LREARHKWGD (212 aa)). [4Fe-4S] cluster-binding residues include Cys117, Cys121, Cys124, Cys380, Cys385, and Cys387.

It belongs to the radical SAM superfamily. Requires [4Fe-4S] cluster as cofactor.

It localises to the cytoplasm. Functionally, catalyzes the formation of the thioether bond required for production of the sporulation killing factor (SKF) from SkfA. Forms the cysteine-methionine thioether bond found in SKF; the acceptor amino acid can be hydrophobic, aromatic or a small hydrophilic amino acid but not a larger hydrophilic amino acid, i.e. Met=Ala, Phe, Leu, Tyr&gt;Asn, Ser&gt;&gt;Gln, Glu, Lys. The relative position of Cys and Met in the substrate cannot be inverted, in vitro the thioether bond cannot be made in the absence of the SkfA propeptide, suggesting this is the first reaction in SKF maturation. In vitro, in the absence of a second substrate, cleaves S-adenosyl-L-methionine into Met and 5'-dA. The sequence is that of Sporulation killing factor maturation protein SkfB from Bacillus subtilis (strain 168).